The following is a 131-amino-acid chain: MKRRTAREKALQTLFQIDVSNIDPKEAITHALDEQESDPFFEELVFGVLEQKDKLDDMISQHLVNWKLDRIANVDRAILRLSVYEMVYQEDIPVSVSMNEAIELAKLFGDDKAPKFVNGVLSNIKNDLKQQ.

It belongs to the NusB family.

Functionally, involved in transcription antitermination. Required for transcription of ribosomal RNA (rRNA) genes. Binds specifically to the boxA antiterminator sequence of the ribosomal RNA (rrn) operons. This chain is Transcription antitermination protein NusB, found in Bacillus pumilus (strain SAFR-032).